A 332-amino-acid chain; its full sequence is Anthranilate phosphoribosyltransferase (332 aa).

5-phospho-alpha-D-ribose 1-diphosphate contacts are provided by residues Gly-79, 82–83 (GD), Thr-87, 89–92 (NIST), 107–115 (KHGNRSVSS), and Ser-119. Gly-79 serves as a coordination point for anthranilate. Ser-91 serves as a coordination point for Mg(2+). Residue Asn-110 coordinates anthranilate. Position 165 (Arg-165) interacts with anthranilate. Mg(2+) is bound by residues Asp-223 and Glu-224.

The protein belongs to the anthranilate phosphoribosyltransferase family. Homodimer. Requires Mg(2+) as cofactor.

It catalyses the reaction N-(5-phospho-beta-D-ribosyl)anthranilate + diphosphate = 5-phospho-alpha-D-ribose 1-diphosphate + anthranilate. The protein operates within amino-acid biosynthesis; L-tryptophan biosynthesis; L-tryptophan from chorismate: step 2/5. Functionally, catalyzes the transfer of the phosphoribosyl group of 5-phosphorylribose-1-pyrophosphate (PRPP) to anthranilate to yield N-(5'-phosphoribosyl)-anthranilate (PRA). The chain is Anthranilate phosphoribosyltransferase from Vibrio vulnificus (strain CMCP6).